Here is a 176-residue protein sequence, read N- to C-terminus: Inorganic pyrophosphatase (176 aa).

Residues Lys-30, Arg-44, and Tyr-56 each contribute to the substrate site. The Mg(2+) site is built by Asp-66, Asp-71, and Asp-103. Tyr-142 provides a ligand contact to substrate.

It belongs to the PPase family. As to quaternary structure, homohexamer. Requires Mg(2+) as cofactor.

Its subcellular location is the cytoplasm. The enzyme catalyses diphosphate + H2O = 2 phosphate + H(+). Functionally, catalyzes the hydrolysis of inorganic pyrophosphate (PPi) forming two phosphate ions. The sequence is that of Inorganic pyrophosphatase from Aeropyrum pernix (strain ATCC 700893 / DSM 11879 / JCM 9820 / NBRC 100138 / K1).